The sequence spans 478 residues: Light-independent protochlorophyllide reductase subunit N (478 aa).

Residues cysteine 22, cysteine 47, and cysteine 107 each coordinate [4Fe-4S] cluster.

The protein belongs to the BchN/ChlN family. In terms of assembly, protochlorophyllide reductase is composed of three subunits; ChlL, ChlN and ChlB. Forms a heterotetramer of two ChlB and two ChlN subunits. [4Fe-4S] cluster serves as cofactor.

It is found in the plastid. The protein localises to the chloroplast. The enzyme catalyses chlorophyllide a + oxidized 2[4Fe-4S]-[ferredoxin] + 2 ADP + 2 phosphate = protochlorophyllide a + reduced 2[4Fe-4S]-[ferredoxin] + 2 ATP + 2 H2O. It participates in porphyrin-containing compound metabolism; chlorophyll biosynthesis (light-independent). Component of the dark-operative protochlorophyllide reductase (DPOR) that uses Mg-ATP and reduced ferredoxin to reduce ring D of protochlorophyllide (Pchlide) to form chlorophyllide a (Chlide). This reaction is light-independent. The NB-protein (ChlN-ChlB) is the catalytic component of the complex. The chain is Light-independent protochlorophyllide reductase subunit N from Chlorokybus atmophyticus (Soil alga).